We begin with the raw amino-acid sequence, 543 residues long: Acrosin-binding protein (543 aa).

The signal sequence occupies residues 1–25 (MRKPAAGFLPSLLKVLLLPLAPAAA). The segment at 26–106 (QDSTQASTPG…ASWFESFCQF (81 aa)) is pro-ACR binding. Residues 26-273 (QDSTQASTPG…NPSSFAPRVR (248 aa)) constitute a propeptide, removed in mature form. Positions 185–272 (SLGGQEQAPE…SNPSSFAPRV (88 aa)) are disordered. The span at 192-220 (APEHKQEQGVEHRQEPTQEHKQEEGQKQE) shows a compositional bias: basic and acidic residues. The segment covering 221-231 (EQEEEQEEEGK) has biased composition (acidic residues). Residues 232–243 (QEEGQGTKEGRE) are compositionally biased toward basic and acidic residues. Positions 319 to 427 (LPHTEALLVL…NQVGSPESGR (109 aa)) are pro-ACR binding.

In terms of assembly, binds proacrosin (pro-ACR). Does not bind the mature form of ACR. In terms of processing, phosphorylated on Tyr residues in capacitated sperm. Post-translationally, the N-terminus is blocked. Synthesized as a 60-kDa precursor, the 32-kDa mature form is post-translationally produced by the removal of the N-terminal half of the precursor during sperm maturation in the testis and/or epididymis. In terms of tissue distribution, expression restricted to testis in normal tissue. Expressed in a wide spectrum of cancers, including bladder, breast, liver, lung and colon cancers.

It localises to the secreted. The protein localises to the cytoplasmic vesicle. It is found in the secretory vesicle. The protein resides in the acrosome. Its function is as follows. Acrosomal protein that maintains proacrosin (pro-ACR) as an enzymatically inactive zymogen in the acrosome. Involved also in the acrosome formation. The polypeptide is Acrosin-binding protein (Homo sapiens (Human)).